Reading from the N-terminus, the 151-residue chain is Large ribosomal subunit protein uL13 (151 aa).

The segment at 126 to 151 (YPGSNHPHEAQKPEKLTIQTIPGGER) is disordered. The span at 131–140 (HPHEAQKPEK) shows a compositional bias: basic and acidic residues.

Belongs to the universal ribosomal protein uL13 family. As to quaternary structure, part of the 50S ribosomal subunit.

In terms of biological role, this protein is one of the early assembly proteins of the 50S ribosomal subunit, although it is not seen to bind rRNA by itself. It is important during the early stages of 50S assembly. This is Large ribosomal subunit protein uL13 from Trichodesmium erythraeum (strain IMS101).